Reading from the N-terminus, the 369-residue chain is Peptide chain release factor subunit 1 (369 aa).

Belongs to the eukaryotic release factor 1 family. In terms of assembly, heterodimer of two subunits, one of which binds GTP.

Its subcellular location is the cytoplasm. In terms of biological role, directs the termination of nascent peptide synthesis (translation) in response to the termination codons UAA, UAG and UGA. This is Peptide chain release factor subunit 1 (prf1) from Saccharolobus solfataricus (strain ATCC 35092 / DSM 1617 / JCM 11322 / P2) (Sulfolobus solfataricus).